A 286-amino-acid polypeptide reads, in one-letter code: 5-amino-6-(5-phospho-D-ribitylamino)uracil phosphatase YwtE (286 aa).

D7 functions as the Nucleophile in the catalytic mechanism. D7 contacts Mg(2+). Phosphate is bound at residue L8. D9 contacts Mg(2+). Phosphate is bound by residues 41 to 42 (TG) and K210. Mg(2+)-binding residues include D233 and S234. N236 is a phosphate binding site.

Belongs to the HAD-like hydrolase superfamily. Cof family. It depends on Mg(2+) as a cofactor.

It catalyses the reaction 5-amino-6-(5-phospho-D-ribitylamino)uracil + H2O = 5-amino-6-(D-ribitylamino)uracil + phosphate. It functions in the pathway cofactor biosynthesis; riboflavin biosynthesis; 5-amino-6-(D-ribitylamino)uracil from GTP: step 4/4. Functionally, catalyzes the dephosphorylation of the riboflavin precursor 5-amino-6-(5-phospho-D-ribitylamino)uracil and of flavin mononucleotide (FMN) in vitro. Also catalyzes the dephosphorylation of phosphorylated 5-6 carbon sugars and monophosphate nucleotides (NMP) in vitro. The sequence is that of 5-amino-6-(5-phospho-D-ribitylamino)uracil phosphatase YwtE (ywtE) from Bacillus subtilis (strain 168).